Reading from the N-terminus, the 224-residue chain is ATP-dependent dethiobiotin synthetase BioD (224 aa).

13–18 (NVGKTI) provides a ligand contact to ATP. Residue Thr-17 participates in Mg(2+) binding. The active site involves Lys-38. A substrate-binding site is contributed by Ser-42. Residues Asp-55, 116-119 (EGAG), 176-177 (NN), and Asn-211 each bind ATP. Asp-55 and Glu-116 together coordinate Mg(2+).

The protein belongs to the dethiobiotin synthetase family. In terms of assembly, homodimer. Requires Mg(2+) as cofactor.

It is found in the cytoplasm. It catalyses the reaction (7R,8S)-7,8-diammoniononanoate + CO2 + ATP = (4R,5S)-dethiobiotin + ADP + phosphate + 3 H(+). The protein operates within cofactor biosynthesis; biotin biosynthesis; biotin from 7,8-diaminononanoate: step 1/2. Catalyzes a mechanistically unusual reaction, the ATP-dependent insertion of CO2 between the N7 and N8 nitrogen atoms of 7,8-diaminopelargonic acid (DAPA, also called 7,8-diammoniononanoate) to form a ureido ring. The polypeptide is ATP-dependent dethiobiotin synthetase BioD (Buchnera aphidicola subsp. Acyrthosiphon pisum (strain 5A)).